The chain runs to 341 residues: Anthranilate phosphoribosyltransferase (341 aa).

5-phospho-alpha-D-ribose 1-diphosphate contacts are provided by residues Gly-79, 82 to 83, Thr-87, 89 to 92, 107 to 115, and Ser-119; these read GD, NIST, and KHGNRAVSS. Anthranilate is bound at residue Gly-79. Ser-91 contributes to the Mg(2+) binding site. Residue Asn-110 coordinates anthranilate. Anthranilate is bound at residue Arg-165. 2 residues coordinate Mg(2+): Asp-224 and Glu-225.

It belongs to the anthranilate phosphoribosyltransferase family. In terms of assembly, homodimer. Mg(2+) serves as cofactor.

The enzyme catalyses N-(5-phospho-beta-D-ribosyl)anthranilate + diphosphate = 5-phospho-alpha-D-ribose 1-diphosphate + anthranilate. It participates in amino-acid biosynthesis; L-tryptophan biosynthesis; L-tryptophan from chorismate: step 2/5. In terms of biological role, catalyzes the transfer of the phosphoribosyl group of 5-phosphorylribose-1-pyrophosphate (PRPP) to anthranilate to yield N-(5'-phosphoribosyl)-anthranilate (PRA). This Bacillus cereus (strain ATCC 14579 / DSM 31 / CCUG 7414 / JCM 2152 / NBRC 15305 / NCIMB 9373 / NCTC 2599 / NRRL B-3711) protein is Anthranilate phosphoribosyltransferase.